The primary structure comprises 91 residues: Small ribosomal subunit protein uS19 (91 aa).

This sequence belongs to the universal ribosomal protein uS19 family.

In terms of biological role, protein S19 forms a complex with S13 that binds strongly to the 16S ribosomal RNA. The sequence is that of Small ribosomal subunit protein uS19 from Amoebophilus asiaticus (strain 5a2).